A 179-amino-acid polypeptide reads, in one-letter code: Bifunctional protein PyrR (179 aa).

A PRPP-binding motif is present at residues 100–112 (VILVDDVLFTGRT).

It belongs to the purine/pyrimidine phosphoribosyltransferase family. PyrR subfamily. Homodimer and homohexamer; in equilibrium.

The enzyme catalyses UMP + diphosphate = 5-phospho-alpha-D-ribose 1-diphosphate + uracil. In terms of biological role, regulates transcriptional attenuation of the pyrimidine nucleotide (pyr) operon by binding in a uridine-dependent manner to specific sites on pyr mRNA. This disrupts an antiterminator hairpin in the RNA and favors formation of a downstream transcription terminator, leading to a reduced expression of downstream genes. Functionally, also displays a weak uracil phosphoribosyltransferase activity which is not physiologically significant. The chain is Bifunctional protein PyrR from Geobacillus sp. (strain WCH70).